The following is a 105-amino-acid chain: Large ribosomal subunit protein eL42 (105 aa).

The interval K23–Q52 is disordered. Over residues K29–Q46 the composition is skewed to basic and acidic residues.

Belongs to the eukaryotic ribosomal protein eL42 family.

The chain is Large ribosomal subunit protein eL42 (rpl-44) from Brugia malayi (Filarial nematode worm).